The primary structure comprises 1035 residues: Enteropeptidase (1035 aa).

A lipid anchor (N-myristoyl glycine) is attached at G2. The Cytoplasmic segment spans residues 2–18 (GSKRSVPSRHRSLTTYE). The chain crosses the membrane as a helical; Signal-anchor for type II membrane protein span at residues 19-47 (VMFAVLFVILVALCAGLIAVSWLSIQGSV). At 48-1035 (KDAAFGKSHE…FTEWIQSFLH (988 aa)) the chain is on the extracellular side. Positions 54–169 (KSHEARGTLK…NSIDITASLE (116 aa)) constitute an SEA domain. Residues N116, N147, N170, and N194 are each glycosylated (N-linked (GlcNAc...) asparagine). One can recognise an LDL-receptor class A 1 domain in the interval 197–238 (IECPPDSRLCADALKCIAIDLFCDGELNCPDGSDEDNKTCAT). 4 cysteine pairs are disulfide-bonded: C199–C212, C206–C225, C219–C236, and C240–C269. N-linked (GlcNAc...) asparagine glycosylation is found at N233, N263, N264, N404, N456, N486, N519, N550, and N646. Positions 240-350 (CDGRFLLTGS…IGFKVTYTAF (111 aa)) constitute a CUB 1 domain. The region spanning 358 to 520 (YEKINCNFED…ISLTYGICNV (163 aa)) is the MAM domain. C540 and C568 are oxidised to a cystine. Residues 540–650 (CGGPHDLWEP…QGFKANFTTG (111 aa)) enclose the CUB 2 domain. The LDL-receptor class A 2 domain maps to 657-695 (EPCKEDNFQCKDGECIPLVNLCDGFPHCKDGSDEAHCVR). Intrachain disulfides connect C659/C671, C666/C684, and C678/C693. In terms of domain architecture, SRCR spans 694 to 787 (VRLFNGTTDS…LILLQCNYKS (94 aa)). N-linked (GlcNAc...) asparagine glycosylation is found at N698, N722, N741, and N762. Intrachain disulfides connect C773/C783, C788/C912, C826/C842, C926/C993, C957/C972, and C983/C1011. Positions 801 to 1035 (IVGGSDSREG…FTEWIQSFLH (235 aa)) constitute a Peptidase S1 domain. H841 functions as the Charge relay system in the catalytic mechanism. N864 carries N-linked (GlcNAc...) asparagine glycosylation. D892 serves as the catalytic Charge relay system. N-linked (GlcNAc...) asparagine glycosylation is found at N903 and N965. Catalysis depends on S987, which acts as the Charge relay system.

The protein belongs to the peptidase S1 family. As to quaternary structure, heterodimer of a catalytic (light) chain and a multidomain (heavy) chain linked by a disulfide bond. In terms of processing, the chains are derived from a single precursor that is cleaved by a trypsin-like protease. As to expression, intestinal brush border.

It is found in the membrane. The catalysed reaction is Activation of trypsinogen by selective cleavage of 6-Lys-|-Ile-7 bond.. Responsible for initiating activation of pancreatic proteolytic proenzymes (trypsin, chymotrypsin and carboxypeptidase A). It catalyzes the conversion of trypsinogen to trypsin which in turn activates other proenzymes including chymotrypsinogen, procarboxypeptidases, and proelastases. This Bos taurus (Bovine) protein is Enteropeptidase (TMPRSS15).